A 342-amino-acid polypeptide reads, in one-letter code: Prostasin (342 aa).

The signal sequence occupies residues 1–29; that stretch reads MAPRVGLGLGQLEAVTILLLLGLLQSGIR. Residues 30 to 32 constitute a propeptide, activation peptide; that stretch reads ADG. Intrachain disulfides connect C37/C154 and C70/C86. Positions 45–286 constitute a Peptidase S1 domain; that stretch reads ITGGGSAKPG…YASWIHHHVA (242 aa). The active-site Charge relay system is the H85. N110 carries an N-linked (GlcNAc...) asparagine glycan. D134 acts as the Charge relay system in catalysis. A glycan (N-linked (GlcNAc...) asparagine) is linked at N159. 3 disulfide bridges follow: C168-C244, C201-C223, and C234-C262. S238 (charge relay system) is an active-site residue. Residues 320-340 form a helical membrane-spanning segment; the sequence is LLRPVLFLPLGLTLGLLSLWL. Residues 323–342 constitute a propeptide that is removed on maturation; that stretch reads PVLFLPLGLTLGLLSLWLEH.

This sequence belongs to the peptidase S1 family. In terms of assembly, heterodimer of two chains, light and heavy, held by a disulfide bond.

Its subcellular location is the cell membrane. The protein resides in the secreted. It localises to the extracellular space. Its function is as follows. Possesses a trypsin-like cleavage specificity with a preference for poly-basic substrates. Stimulates epithelial sodium channel (ENaC) activity through activating cleavage of the gamma subunits (SCNN1G). The chain is Prostasin (Prss8) from Mus musculus (Mouse).